A 101-amino-acid chain; its full sequence is U-scoloptoxin(10)-Sm2a (101 aa).

An N-terminal signal peptide occupies residues 1-23; that stretch reads MNKSMIILCAVLFLTYIIEENEA.

This sequence belongs to the scoloptoxin-10 family. Post-translationally, contains 3 disulfide bonds. Expressed by the venom gland.

Its subcellular location is the secreted. This Scolopendra morsitans (Tanzanian blue ringleg centipede) protein is U-scoloptoxin(10)-Sm2a.